A 1020-amino-acid chain; its full sequence is C2 and GRAM domain-containing protein At1g03370 (1020 aa).

One can recognise a C2 1 domain in the interval 1–102; the sequence is MKLQVRVVEA…ENQSLGTVWY (102 aa). 5 residues coordinate Ca(2+): Asp17, Asp23, Asp69, Asp71, and Asp77. Polar residues-rich tracts occupy residues 134-144 and 158-172; these read TSSGDQTSASR and TCAS…SSIP. The disordered stretch occupies residues 134–172; it reads TSSGDQTSASRSPDLRLESPIDPSTCASPSRSDDASSIP. Residues 249-421 form the VASt 1 domain; it reads SGGVVVDQLF…LLAQSVKPVD (173 aa). The helical transmembrane segment at 454-474 threads the bilayer; it reads FTVLSTFLIGIYVFVHIVFAI. A C2 2 domain is found at 517–635; that stretch reads QARKQKGSDH…NISDLADVWV (119 aa). The Ca(2+) site is built by Asp551, Asp557, Asp604, Phe605, and Asp606. The GRAM domain maps to 689-752; it reads AFQKLFGLPQ…LWEDIEEIQV (64 aa). One can recognise a VASt 2 domain in the interval 848–1010; that stretch reads RFSEVFSLTL…MTFGFLEKEY (163 aa).

Ca(2+) is required as a cofactor.

It localises to the membrane. This Arabidopsis thaliana (Mouse-ear cress) protein is C2 and GRAM domain-containing protein At1g03370.